Here is a 103-residue protein sequence, read N- to C-terminus: MYALIEYKGKQYKAEKGAKLVVDKLSAESGSKIDIDTVLLISDGDKVTVGTPYVSGAKVSATVGDSFRERKIIVYKHKAKKNYHRTQGHRQAHTCITVDNIVG.

Belongs to the bacterial ribosomal protein bL21 family. In terms of assembly, part of the 50S ribosomal subunit. Contacts protein L20.

Functionally, this protein binds to 23S rRNA in the presence of protein L20. The protein is Large ribosomal subunit protein bL21 of Treponema denticola (strain ATCC 35405 / DSM 14222 / CIP 103919 / JCM 8153 / KCTC 15104).